Reading from the N-terminus, the 84-residue chain is Beta-mammal/insect toxin Ts1 (84 aa).

The first 20 residues, 1-20 (MKGMILFISCLLLIGIVVEC), serve as a signal peptide directing secretion. The region spanning 21–82 (KEGYLMDHEG…VWDRATNKCG (62 aa)) is the LCN-type CS-alpha/beta domain. 4 disulfides stabilise this stretch: Cys31–Cys81, Cys35–Cys57, Cys43–Cys62, and Cys47–Cys64. Cys81 is subject to Cysteine amide.

It belongs to the long (4 C-C) scorpion toxin superfamily. Sodium channel inhibitor family. Post-translationally, C-terminal amidation is important for high activity. In terms of tissue distribution, expressed by the venom gland.

The protein localises to the secreted. In terms of biological role, voltage-gated sodium channels (Nav) gating-modifier. Acts both as alpha- and beta-toxin, since it affects not only activation but also inactivation of Nav channels. Binds to Nav domain DII and impairs the four Nav channel voltage sensors movements. Depending on Nav channel subtypes tested, can also bind Nav domains DIII (low affinity) and DIV (very low affinity). Acts on almost all the Nav channels tested (mammalian Nav1.2/SCN2A, Nav1.3/SCN3A, Nav1.4/SCN4A, Nav1.5/SCN5A, Nav1.6/SCN8A, Nav1.9/SCN11A, and insect DmNav1). Is highly active against both mammals and insects. Irreversibly modulates DmNav channels. Other Ts1 activities have been studied, such as immunomodulation, antimicrobial activity or exocrine secretion. This toxin exhibits an antifungal activity against filamentous fungi. In vitro, it has an important immunomodulatory effect on macrophages by stimulating the release of pro-inflammatory cytokines. It also shows an activity in exocrine secretion in pancreas, stomach and adrenal gland. The chain is Beta-mammal/insect toxin Ts1 from Tityus serrulatus (Brazilian scorpion).